A 281-amino-acid polypeptide reads, in one-letter code: Very long chain fatty acid elongase 7 (281 aa).

A2 is subject to N-acetylalanine. Over 2–27 the chain is Lumenal; sequence AFSDLTSRTVHLYDNWIKDADPRVED. The chain crosses the membrane as a helical span at residues 28–48; the sequence is WLLMSSPLPQTILLGFYVYFV. The Cytoplasmic portion of the chain corresponds to 49–72; it reads TSLGPKLMENRKPFELKKAMITYN. The chain crosses the membrane as a helical span at residues 73-93; sequence FFIVLFSVYMCYEFVMSGWGI. Residues 94-115 are Lumenal-facing; the sequence is GYSFRCDIVDYSRSPTALRMAR. C99 and C231 are disulfide-bonded. Residues 116-136 form a helical membrane-spanning segment; it reads TCWLYYFSKFIELLDTIFFVL. The 3-oxoeicosanoyl-CoA site is built by K124, R137, K139, Q142, and H147. The Cytoplasmic segment spans residues 137–142; it reads RKKNSQ. The helical transmembrane segment at 143–162 threads the bilayer; it reads VTFLHVFHHTIMPWTWWFGV. The HxxHH motif motif lies at 147-151; that stretch reads HVFHH. H150 functions as the Nucleophile in the catalytic mechanism. At 163–171 the chain is on the lumenal side; sequence KFAAGGLGT. The chain crosses the membrane as a helical span at residues 172–194; that stretch reads FHALLNTAVHVVMYSYYGLSALG. Positions 187, 204, 208, and 211 each coordinate 3-oxoeicosanoyl-CoA. Topologically, residues 195-206 are cytoplasmic; the sequence is PAYQKYLWWKKY. A helical transmembrane segment spans residues 207–227; sequence LTSLQLVQFVIVAIHISQFFF. At 228–236 the chain is on the lumenal side; it reads MEDCKYQFP. The helical transmembrane segment at 237–257 threads the bilayer; it reads VFACIIMSYSFMFLLLFLHFW. Topologically, residues 258-281 are cytoplasmic; the sequence is YRAYTKGQRLPKTVKNGTCKNKDN. A 3-oxoeicosanoyl-CoA-binding site is contributed by R266. The short motif at 277-281 is the Di-lysine motif element; that stretch reads KNKDN.

It belongs to the ELO family. ELOVL7 subfamily. Homodimer. Interacts with TECR. As to expression, expressed in most tissues except heart and skeletal muscle.

It localises to the endoplasmic reticulum membrane. The enzyme catalyses a very-long-chain acyl-CoA + malonyl-CoA + H(+) = a very-long-chain 3-oxoacyl-CoA + CO2 + CoA. The catalysed reaction is eicosanoyl-CoA + malonyl-CoA + H(+) = 3-oxodocosanoyl-CoA + CO2 + CoA. It catalyses the reaction (5Z,8Z,11Z,14Z)-eicosatetraenoyl-CoA + malonyl-CoA + H(+) = (7Z,10Z,13Z,16Z)-3-oxodocosatetraenoyl-CoA + CO2 + CoA. It carries out the reaction (6Z,9Z,12Z)-octadecatrienoyl-CoA + malonyl-CoA + H(+) = (8Z,11Z,14Z)-3-oxoeicosatrienoyl-CoA + CO2 + CoA. The enzyme catalyses (9Z,12Z)-octadecadienoyl-CoA + malonyl-CoA + H(+) = (11Z,14Z)-3-oxoicosa-11,14-dienoyl-CoA + CO2 + CoA. The catalysed reaction is (9Z)-octadecenoyl-CoA + malonyl-CoA + H(+) = 3-oxo-(11Z)-eicosenoyl-CoA + CO2 + CoA. It catalyses the reaction octadecanoyl-CoA + malonyl-CoA + H(+) = 3-oxoeicosanoyl-CoA + CO2 + CoA. It carries out the reaction hexadecanoyl-CoA + malonyl-CoA + H(+) = 3-oxooctadecanoyl-CoA + CO2 + CoA. The enzyme catalyses (9Z,12Z,15Z)-octadecatrienoyl-CoA + malonyl-CoA + H(+) = (11Z,14Z,17Z)-3-oxoeicosatrienoyl-CoA + CO2 + CoA. The protein operates within lipid metabolism; fatty acid biosynthesis. Functionally, catalyzes the first and rate-limiting reaction of the four reactions that constitute the long-chain fatty acids elongation cycle. This endoplasmic reticulum-bound enzymatic process allows the addition of 2 carbons to the chain of long- and very long-chain fatty acids (VLCFAs) per cycle. Condensing enzyme with higher activity toward C18 acyl-CoAs, especially C18:3(n-3) acyl-CoAs and C18:3(n-6)-CoAs. Also active toward C20:4-, C18:0-, C18:1-, C18:2- and C16:0-CoAs, and weakly toward C20:0-CoA. Little or no activity toward C22:0-, C24:0-, or C26:0-CoAs. May participate in the production of saturated and polyunsaturated VLCFAs of different chain lengths that are involved in multiple biological processes as precursors of membrane lipids and lipid mediators. In Homo sapiens (Human), this protein is Very long chain fatty acid elongase 7.